We begin with the raw amino-acid sequence, 478 residues long: Cytochrome P450 monooxygenase ATR3 (478 aa).

Residues 20–42 (AVAFVTASALYYVLPAAISHIQL) form a helical membrane-spanning segment. N159 and N268 each carry an N-linked (GlcNAc...) asparagine glycan.

Belongs to the cytochrome P450 family. It depends on heme as a cofactor.

It localises to the membrane. Its pathway is mycotoxin biosynthesis. In terms of biological role, cytochrome P450 monooxygenase; part of the core atranone cluster (CAC) which products are predicted to catalyze most or all steps of mycotoxin atranone synthesis, starting from geranylgeranyl pyrophosphate (GGPP). The initial cyclization of GGPP to dolabellane is probably performed by the terpene cyclase ATR13. The Baeyer-Villiger oxidation near the end of the atranone synthesis, which converts atranones D and E to atranones F and G is predicted to be catalyzed by the monooxygenase ATR8. Of the CAC's other predicted gene products, the reducing PKS ATR6 might synthesize a polyketide chain. This polyketide is probably transferred onto the atranone backbone by the polyketide transferase ATR5. Other predicted CAC products include 4 oxygenases (ATR2, ATR3, ATR4, and ATR14), 3 short-chain reductases (ATR7, ATR9, and ATR10), and a methyltransferase (ATR12). These may all be involved in the various steps of atranone biosynthesis, although their specific roles must await experimental determination. This Stachybotrys chlorohalonatus (strain IBT 40285) protein is Cytochrome P450 monooxygenase ATR3.